Consider the following 633-residue polypeptide: tRNA uridine 5-carboxymethylaminomethyl modification enzyme MnmG (633 aa).

Residues 15–20 (GAGHAG), Val-127, and Ser-182 contribute to the FAD site. 276 to 290 (GPRYCPSIEDKIVRF) contacts NAD(+). Gln-373 lines the FAD pocket.

It belongs to the MnmG family. As to quaternary structure, homodimer. Heterotetramer of two MnmE and two MnmG subunits. Requires FAD as cofactor.

It localises to the cytoplasm. Its function is as follows. NAD-binding protein involved in the addition of a carboxymethylaminomethyl (cmnm) group at the wobble position (U34) of certain tRNAs, forming tRNA-cmnm(5)s(2)U34. The chain is tRNA uridine 5-carboxymethylaminomethyl modification enzyme MnmG from Streptococcus thermophilus (strain ATCC BAA-491 / LMD-9).